A 224-amino-acid polypeptide reads, in one-letter code: Phosphoglycolate phosphatase (224 aa).

Residue aspartate 10 is the Nucleophile of the active site. Mg(2+) is bound by residues aspartate 10, aspartate 12, and aspartate 176.

The protein belongs to the HAD-like hydrolase superfamily. CbbY/CbbZ/Gph/YieH family. It depends on Mg(2+) as a cofactor.

The enzyme catalyses 2-phosphoglycolate + H2O = glycolate + phosphate. It participates in organic acid metabolism; glycolate biosynthesis; glycolate from 2-phosphoglycolate: step 1/1. Specifically catalyzes the dephosphorylation of 2-phosphoglycolate. Is involved in the dissimilation of the intracellular 2-phosphoglycolate formed during the DNA repair of 3'-phosphoglycolate ends, a major class of DNA lesions induced by oxidative stress. The polypeptide is Phosphoglycolate phosphatase (Pasteurella multocida (strain Pm70)).